A 307-amino-acid chain; its full sequence is Leucine-rich repeat-containing protein 59 (307 aa).

The residue at position 1 (M1) is an N-acetylmethionine. T2 is modified (N-acetylthreonine; in Leucine-rich repeat-containing protein 59, N-terminally processed). The Cytoplasmic segment spans residues 2–244; sequence TKAGSKGGNL…KPPPRKHTRS (243 aa). LRR repeat units follow at residues 10-31, 40-62, 63-84, 86-107, and 109-128; these read NLRDKLDGNELDLSLSDLNEVP, KATVLDLSCNKLSTLPSDFCGLT, HLVKLDLSKNKLQQLPADFGRL, NLQHLDLLNNRLVTLPVSFAQL, and NLKWLDLKDNPLDPVLAKVA. S23 and S25 each carry phosphoserine. K73 carries the post-translational modification N6-succinyllysine. N6-acetyllysine is present on K135. Positions 148-216 form a coiled coil; the sequence is MKAVQADQER…KASKREQEKK (69 aa). Positions 150-241 are disordered; the sequence is AVQADQERER…RPRKPPPRKH (92 aa). A compositionally biased stretch (basic and acidic residues) spans 154–221; sequence DQERERQRRL…EQEKKPKKEA (68 aa). A compositionally biased stretch (basic residues) spans 229-241; the sequence is SGSRPRKPPPRKH. The helical transmembrane segment at 245–265 threads the bilayer; it reads WAVLKVLLLLLLLCVAGGLVV. At 266–307 the chain is on the lumenal side; sequence CRVTGLHQQPLCTSVNTIYDNAVQGLRHHEILQWVLQTDSQQ.

In terms of assembly, can form homodimers. Interacts with SGO1. Interacts with FGF1.

Its subcellular location is the microsome membrane. The protein resides in the endoplasmic reticulum membrane. It localises to the nucleus envelope. Functionally, required for nuclear import of FGF1, but not that of FGF2. Might regulate nuclear import of exogenous FGF1 by facilitating interaction with the nuclear import machinery and by transporting cytosolic FGF1 to, and possibly through, the nuclear pores. This Mus musculus (Mouse) protein is Leucine-rich repeat-containing protein 59 (Lrrc59).